A 1026-amino-acid polypeptide reads, in one-letter code: Multidrug resistance protein MdtC (1026 aa).

11 consecutive transmembrane segments (helical) span residues 15 to 35, 333 to 353, 360 to 380, 387 to 407, 431 to 451, 463 to 483, 528 to 548, 853 to 873, 897 to 917, 953 to 973, and 984 to 1004; these read ILIAAAITLCGILGFRLLPVA, EVEETLAISVALVIMVVFLFL, LIPAVAVPVSLIGTFAAMYLC, LSLMALTIATGFVVDDAIVVL, VGFTVISMSLSLVAVFLPLLL, FAVTLSVAIGISLVVSLTLTP, LVGVVFLGTVALNIWLYIAIP, LILIVAAIATVYIVLGILYES, LFNAPFSLIALIGIMLLIGIV, PIMMTTLAALFGALPLVLSGG, and ITIVGGLVMSQLLTLYTTPVV.

Belongs to the resistance-nodulation-cell division (RND) (TC 2.A.6) family. MdtC subfamily. In terms of assembly, part of a tripartite efflux system composed of MdtA, MdtB and MdtC. MdtC forms a heteromultimer with MdtB.

It is found in the cell inner membrane. The protein is Multidrug resistance protein MdtC of Salmonella choleraesuis (strain SC-B67).